The chain runs to 247 residues: MSHLTVSKILEDPFSALSLSEMLKILAALGWSTNYLAMAHRTHADRLPAIAVLPLCCDIAWEFTYAWIYPQASGHWQGVVRVWFFLHTAVLAATLRYAPNDWAGTPLGKSRARLVLLYVAVIGAFAAGQLCLALEMGGALGFHWGGALCQFLSSSGAVGQLLTRGHTRGASLVIWGARAISTAGGFVKLCIRFQHQVDGAPWLDSPMCWFYIGIVLSLDASYPVLYQLTRRHEEASGRGNSGKVKNR.

Helical transmembrane passes span 49-69 (AIAV…AWIY), 75-95 (HWQG…AATL), 114-134 (LVLL…CLAL), 138-158 (GALG…SGAV), 171-191 (SLVI…KLCI), and 206-226 (PMCW…PVLY).

Belongs to the paxB family.

The protein localises to the membrane. It participates in secondary metabolite biosynthesis; terpenoid biosynthesis. In terms of biological role, terpene cyclase; part of the gene cluster that mediates the biosynthesis of calidodehydroaustin, a fungal meroterpenoid. The first step of the pathway is the synthesis of 3,5-dimethylorsellinic acid by the polyketide synthase ausA. 3,5-dimethylorsellinic acid is then prenylated by the polyprenyl transferase ausN. Further epoxidation by the FAD-dependent monooxygenase ausM and cyclization by the probable terpene cyclase ausL lead to the formation of protoaustinoid A. Protoaustinoid A is then oxidized to spiro-lactone preaustinoid A3 by the combined action of the FAD-binding monooxygenases ausB and ausC, and the dioxygenase ausE. Acid-catalyzed keto-rearrangement and ring contraction of the tetraketide portion of preaustinoid A3 by ausJ lead to the formation of preaustinoid A4. The aldo-keto reductase ausK, with the help of ausH, is involved in the next step by transforming preaustinoid A4 into isoaustinone which is in turn hydroxylated by the P450 monooxygenase ausI to form austinolide. The cytochrome P450 monooxygenase ausG modifies austinolide to austinol. Austinol is further acetylated to austin by the O-acetyltransferase ausP, which spontaneously changes to dehydroaustin. The cytochrome P450 monooxygenase ausR then converts dehydroaustin is into 7-dehydrodehydroaustin. The hydroxylation catalyzed by ausR permits the O-acetyltransferase ausQ to add an additional acetyl group to the molecule, leading to the formation of acetoxydehydroaustin. The short chain dehydrogenase ausT catalyzes the reduction of the double bond present between carbon atoms 1 and 2 to convert 7-dehydrodehydroaustin into 1,2-dihydro-7-hydroxydehydroaustin. AusQ catalyzes not only an acetylation reaction but also the addition of the PKS ausV diketide product to 1,2-dihydro-7-hydroxydehydroaustin, forming precalidodehydroaustin. Finally, the iron/alpha-ketoglutarate-dependent dioxygenase converts precalidodehydroaustin into calidodehydroaustin. The sequence is that of Terpene cyclase ausL from Aspergillus calidoustus.